The sequence spans 203 residues: Small ribosomal subunit protein uS4 (203 aa).

The S4 RNA-binding domain maps to 93–156 (RRLDNVVYRL…IKVPAILEAV (64 aa)).

The protein belongs to the universal ribosomal protein uS4 family. Part of the 30S ribosomal subunit. Contacts protein S5. The interaction surface between S4 and S5 is involved in control of translational fidelity.

In terms of biological role, one of the primary rRNA binding proteins, it binds directly to 16S rRNA where it nucleates assembly of the body of the 30S subunit. Its function is as follows. With S5 and S12 plays an important role in translational accuracy. This chain is Small ribosomal subunit protein uS4, found in Streptococcus suis (strain 98HAH33).